The chain runs to 272 residues: Undecaprenyl-diphosphatase (272 aa).

8 consecutive transmembrane segments (helical) span residues Tyr5–Val25, Ala45–Trp65, His88–Phe108, Ala114–Ala134, Tyr153–Ser172, Tyr189–Leu209, Gly221–Ile241, and Ile251–Phe271.

Belongs to the UppP family.

The protein localises to the cell inner membrane. The catalysed reaction is di-trans,octa-cis-undecaprenyl diphosphate + H2O = di-trans,octa-cis-undecaprenyl phosphate + phosphate + H(+). Functionally, catalyzes the dephosphorylation of undecaprenyl diphosphate (UPP). Confers resistance to bacitracin. This is Undecaprenyl-diphosphatase from Yersinia pseudotuberculosis serotype IB (strain PB1/+).